Here is a 574-residue protein sequence, read N- to C-terminus: Desiccation/radiation resistance protein DR_1769 (574 aa).

The first 33 residues, 1–33 (MPDPAARRFSLPPFPLAALALSVALLGAPASLA), serve as a signal peptide directing secretion. Positions 400–438 (TAQTQARQAAAAASTSQQPRLPTLAQAPAPTPAPAQTTP) are enriched in low complexity. Positions 400–461 (TAQTQARQAA…APVPPVASPA (62 aa)) are disordered. Residues 439–459 (RPQPTPAQPATPAAPVPPVAS) are compositionally biased toward pro residues.

Functionally, plays an important role in resistance to desiccation and radiation, maybe by protecting genome integrity under extreme conditions. This Deinococcus radiodurans (strain ATCC 13939 / DSM 20539 / JCM 16871 / CCUG 27074 / LMG 4051 / NBRC 15346 / NCIMB 9279 / VKM B-1422 / R1) protein is Desiccation/radiation resistance protein DR_1769.